The chain runs to 214 residues: NADH-quinone oxidoreductase subunit C (214 aa).

This sequence belongs to the complex I 30 kDa subunit family. NDH-1 is composed of 14 different subunits. Subunits NuoB, C, D, E, F, and G constitute the peripheral sector of the complex.

The protein resides in the cell inner membrane. The catalysed reaction is a quinone + NADH + 5 H(+)(in) = a quinol + NAD(+) + 4 H(+)(out). Functionally, NDH-1 shuttles electrons from NADH, via FMN and iron-sulfur (Fe-S) centers, to quinones in the respiratory chain. The immediate electron acceptor for the enzyme in this species is believed to be ubiquinone. Couples the redox reaction to proton translocation (for every two electrons transferred, four hydrogen ions are translocated across the cytoplasmic membrane), and thus conserves the redox energy in a proton gradient. The sequence is that of NADH-quinone oxidoreductase subunit C from Francisella tularensis subsp. novicida (strain U112).